A 342-amino-acid polypeptide reads, in one-letter code: UHRF1-like protein (342 aa).

Residues Ser41–Ile149 are disordered. Positions Glu42–Arg59 are enriched in polar residues. A compositionally biased stretch (basic and acidic residues) spans Asn74–Leu90. Residues Thr115–His141 are compositionally biased toward polar residues. The YDG domain maps to Gly168–Arg322. Asp218 contacts DNA. The disordered stretch occupies residues Lys236–Asp257. Polar residues predominate over residues Thr238–Asp257.

It is found in the nucleus. Involved in the maintenance of DNA methylation. Binds hemimethylated DNA. The sequence is that of UHRF1-like protein from Cryptococcus neoformans var. grubii serotype A (strain H99 / ATCC 208821 / CBS 10515 / FGSC 9487) (Filobasidiella neoformans var. grubii).